Consider the following 102-residue polypeptide: Glutaredoxin-C14 (102 aa).

A Glutaredoxin domain is found at 1-101; that stretch reads MDKVMRMSSE…PLIKPYQSFH (101 aa). Cys-21 and Cys-24 form a disulfide bridge.

The protein belongs to the glutaredoxin family. CC-type subfamily.

The protein localises to the cytoplasm. Its function is as follows. Has a glutathione-disulfide oxidoreductase activity in the presence of NADPH and glutathione reductase. Reduces low molecular weight disulfides and proteins. In Arabidopsis thaliana (Mouse-ear cress), this protein is Glutaredoxin-C14 (GRXC14).